The primary structure comprises 926 residues: Ubiquitin carboxyl-terminal hydrolase 4 (926 aa).

The 124-residue stretch at 205 to 328 (SQMEILLIDI…WLKSNYGRQV (124 aa)) folds into the Rhodanese domain. Residue serine 443 is modified to Phosphoserine. One can recognise a USP domain in the interval 562–923 (VGLENLGNSC…NAYVLFYHRV (362 aa)). The active-site Nucleophile is the cysteine 571. Histidine 880 functions as the Proton acceptor in the catalytic mechanism.

The protein belongs to the peptidase C19 family. In terms of assembly, interacts with BRO1, RFU1 and VPS32. Associates with the 26S proteasome.

The protein localises to the cytoplasm. It is found in the late endosome membrane. The enzyme catalyses Thiol-dependent hydrolysis of ester, thioester, amide, peptide and isopeptide bonds formed by the C-terminal Gly of ubiquitin (a 76-residue protein attached to proteins as an intracellular targeting signal).. Its activity is regulated as follows. RFU1 is an inhibitor of deubiquitination activity. Ubiquitin thioesterase that acts at the late endosome/prevacuolar compartment to recover ubiquitin from ubiquitinated membrane proteins en route to the vacuole. Also removes ubiquitin from soluble proteins targeted to proteasomes. Is essential to maintain a normal level of free ubiquitin. Involved in the ammonium-induced down-regulation of the GAP1 permease and the UME3 destruction in response to oxidative stress. Has a role in the RAD9 checkpoint response to TOP1 poisons. Required for promoting coordination of DNA replication and avoids DNA overreplication. The polypeptide is Ubiquitin carboxyl-terminal hydrolase 4 (DOA4) (Saccharomyces cerevisiae (strain RM11-1a) (Baker's yeast)).